Consider the following 204-residue polypeptide: Synaptosomal-associated protein 25-A (204 aa).

The span at 1–11 shows a compositional bias: basic and acidic residues; sequence MAEDADMRNEL. Residues 1–25 form a disordered region; the sequence is MAEDADMRNELSDMQQRADQLADES. 2 t-SNARE coiled-coil homology domains span residues 19 to 81 and 138 to 200; these read DQLA…LNDL and DARE…ATKM.

It belongs to the SNAP-25 family.

It is found in the synapse. The protein resides in the synaptosome. Its subcellular location is the cell membrane. Functionally, may play an important role in the synaptic function of specific neuronal systems. Associates with proteins involved in vesicle docking and membrane fusion. This Carassius auratus (Goldfish) protein is Synaptosomal-associated protein 25-A (snap25a).